A 228-amino-acid chain; its full sequence is MNNGLMALQARLQHEFSNPGLLTRALTHRSFSLDHNERLEFLGDSVLGLAVADLLYERLSTLPEGDLSRVRANLVKQDTLHHLALGLGLPEVIRLGEGEARSGGHKRPSILADALEAVIGAVYLDAGFAVAQGLVRRLFQAVEIKSDMEAIGKDPKTELQEWLQGRKMNLPLYRVVATLGAAHKQTFDVECEIVELNFLERGIGGSRRAGEQAAAAAMLQTLKAKAAQ.

The RNase III domain occupies 5-127 (LMALQARLQH…VIGAVYLDAG (123 aa)). Position 40 (Glu40) interacts with Mg(2+). Residue Asp44 is part of the active site. Mg(2+) contacts are provided by Asp113 and Glu116. The active site involves Glu116. Residues 154–224 (DPKTELQEWL…AAAMLQTLKA (71 aa)) form the DRBM domain.

This sequence belongs to the ribonuclease III family. In terms of assembly, homodimer. Requires Mg(2+) as cofactor.

It is found in the cytoplasm. The enzyme catalyses Endonucleolytic cleavage to 5'-phosphomonoester.. Digests double-stranded RNA. Involved in the processing of primary rRNA transcript to yield the immediate precursors to the large and small rRNAs (23S and 16S). Processes some mRNAs, and tRNAs when they are encoded in the rRNA operon. Processes pre-crRNA and tracrRNA of type II CRISPR loci if present in the organism. The protein is Ribonuclease 3 of Albidiferax ferrireducens (strain ATCC BAA-621 / DSM 15236 / T118) (Rhodoferax ferrireducens).